Here is a 377-residue protein sequence, read N- to C-terminus: MSRGIIIIGSGFAARQLVKNIRKQDAHVPLTLIAADSMDEYNKPDLSHVISQSQRADDLTRQLAGEFAEQFNLRLFPHTWVADIDADAHVVKSQDKQWQYDKLVLATGATAFVPPIAGRELMLTLNSQQEYRACETQLRDAQRVLIVGGGLIGSELAMDFCRAGKTVTLMDNAASLLASLMPPEVSSRLQHHLTDMGVHLLLKSQLQKLEKTEAGIRATLVSQHSIEVDAVIAATGLRPETALARRAGVVVNRGVCVDSYLQTSHPDIYAIGDCAEINGQVLPFLQPIQLSAMYLAKNLLGGNAPLKLPAMLVKVKTPELPLHLAGETQRRDLSWQITAESDGMIAKGMSGEGQLRAFVVSEDRMKEAFALLKTLSV.

Belongs to the FAD-dependent oxidoreductase family. Requires FAD as cofactor.

The protein localises to the cytoplasm. It carries out the reaction 2 reduced [nitric oxide reductase rubredoxin domain] + NAD(+) + H(+) = 2 oxidized [nitric oxide reductase rubredoxin domain] + NADH. It participates in nitrogen metabolism; nitric oxide reduction. One of at least two accessory proteins for anaerobic nitric oxide (NO) reductase. Reduces the rubredoxin moiety of NO reductase. The polypeptide is Nitric oxide reductase FlRd-NAD(+) reductase (Salmonella newport (strain SL254)).